We begin with the raw amino-acid sequence, 126 residues long: MLIKFLIIPINGKKTLIQYSKSGFDEETRKYIPTLRRTDLLRIAKNCNIQLSKEMYDFEISNKIIHWKPSSLSYSRKELTKLTKKDIISLFNIHNINTTKAECKFDLIESFLQQQKLYFYENLDEE.

This is an uncharacterized protein from Invertebrate iridescent virus 6 (IIV-6).